We begin with the raw amino-acid sequence, 123 residues long: uncharacterized protein (123 aa).

The signal sequence occupies residues 1–24 (MLPLCLTFLSFFLSLGGSFKAVMT). A run of 2 helical transmembrane segments spans residues 39–59 (FWIFNWTVTLIPLNSLVALAI) and 101–121 (FGGILTIDLSFYWALGVALTG).

The protein resides in the membrane. This is an uncharacterized protein from Saccharomyces cerevisiae (strain ATCC 204508 / S288c) (Baker's yeast).